A 366-amino-acid polypeptide reads, in one-letter code: MNKVVLYCRPGFEKECAAEITDKAARLEVFGFARVKEDSGYVIFEGYQQDDGEKLVRDLPFSSLIFARQMFVVGELLRDLPPEDRITPIVGMLQGMVEKGGELRVEVADTNESKELMKFCRKFTVPLRAALREAGVLTNYETPKRPVVHVFFIAPGCCYTGYSYSNNNSPFYMGIPRLKFPSDAPSRSTLKLEEAFHVFIPADEWDERLANGMYAVDLGACPGGWTYQLVKRNMWVSSVDNGPMAQSLMDTGQVTWLREDGFRYRPNRNNISWMVCDMVEKPAKVAALMAQWLVNGWCRETIFNLKLPMKKRYEEVSQNLAYIQAQLDEHGVNAQIQARQLYHDREEVTVHVRRLWAAVGGRRDER.

S-adenosyl-L-methionine-binding positions include Ser188, 221 to 224 (CPGG), Asp240, Asp260, and Asp277. Catalysis depends on Lys306, which acts as the Proton acceptor.

It belongs to the class I-like SAM-binding methyltransferase superfamily. RNA methyltransferase RlmE family. RlmM subfamily. In terms of assembly, monomer.

Its subcellular location is the cytoplasm. It carries out the reaction cytidine(2498) in 23S rRNA + S-adenosyl-L-methionine = 2'-O-methylcytidine(2498) in 23S rRNA + S-adenosyl-L-homocysteine + H(+). Functionally, catalyzes the 2'-O-methylation at nucleotide C2498 in 23S rRNA. In Klebsiella pneumoniae subsp. pneumoniae (strain ATCC 700721 / MGH 78578), this protein is Ribosomal RNA large subunit methyltransferase M.